A 262-amino-acid polypeptide reads, in one-letter code: Abhydrolase domain-containing protein AKT2 (262 aa).

A Peroxisomal targeting signal type 1 motif is present at residues 260-262; that stretch reads SKL.

This sequence belongs to the AB hydrolase superfamily. AKT2 hydrolase family.

It localises to the peroxisome. It functions in the pathway mycotoxin biosynthesis. In terms of biological role, abhydrolase domain-containing protein; part of the gene clusters that mediate the biosynthesis of the host-selective toxins (HSTs) AK-toxins responsible for Japanese pear black spot disease by the Japanese pear pathotype. AK-toxins are esters of 9,10-epoxy 8-hydroxy 9-methyldecatrienoic acid (EDA). On cellular level, AK-toxins affect plasma membrane of susceptible cells and cause a sudden increase in loss of K(+) after a few minutes of toxin treatment. The acyl-CoA ligase AKT1, the hydrolase AKT2 and enoyl-CoA hydratase AKT3 are all involved in the biosynthesis of the AK-, AF- and ACT-toxin common 9,10-epoxy-8-hydroxy-9-methyl-decatrienoic acid (EDA) structural moiety. Part of the EDA biosynthesis occurs in the peroxisome since these 3 enzymes are localized in peroxisomes. The exact roles of the 3 enzymes, as well as of additional AK-toxin clusters enzymes, including AKT4, AKT6 and AKTS1, have still to be elucidated. The Cytochrome P450 monooxygenase AKT7 on the other side functions to limit production of EDA and AK-toxin, probably via the catalysis of a side reaction of EDA or its precursor. The protein is Abhydrolase domain-containing protein AKT2 of Alternaria alternata (Alternaria rot fungus).